The sequence spans 353 residues: UDP-N-acetylglucosamine--N-acetylmuramyl-(pentapeptide) pyrophosphoryl-undecaprenol N-acetylglucosamine transferase (353 aa).

Residues 10 to 12 (TGG), asparagine 124, serine 183, and glutamine 283 each bind UDP-N-acetyl-alpha-D-glucosamine.

This sequence belongs to the glycosyltransferase 28 family. MurG subfamily.

It is found in the cell inner membrane. The enzyme catalyses di-trans,octa-cis-undecaprenyl diphospho-N-acetyl-alpha-D-muramoyl-L-alanyl-D-glutamyl-meso-2,6-diaminopimeloyl-D-alanyl-D-alanine + UDP-N-acetyl-alpha-D-glucosamine = di-trans,octa-cis-undecaprenyl diphospho-[N-acetyl-alpha-D-glucosaminyl-(1-&gt;4)]-N-acetyl-alpha-D-muramoyl-L-alanyl-D-glutamyl-meso-2,6-diaminopimeloyl-D-alanyl-D-alanine + UDP + H(+). The protein operates within cell wall biogenesis; peptidoglycan biosynthesis. Cell wall formation. Catalyzes the transfer of a GlcNAc subunit on undecaprenyl-pyrophosphoryl-MurNAc-pentapeptide (lipid intermediate I) to form undecaprenyl-pyrophosphoryl-MurNAc-(pentapeptide)GlcNAc (lipid intermediate II). This is UDP-N-acetylglucosamine--N-acetylmuramyl-(pentapeptide) pyrophosphoryl-undecaprenol N-acetylglucosamine transferase from Helicobacter pylori (strain Shi470).